We begin with the raw amino-acid sequence, 336 residues long: MKSTSKIYTDKDSNLDVIKGKRIAVLGYGSQGRAWAQNLRDSGLNVVVGLEREGKSWELAKSDGIIPLHTKDAVKDADIIVFLVPDMVQRTLWLESVQPYMKKGADLVFAHGFNIHYKLIEPPKDSDVYMIAPKGPGPTVREYYKAGGGVPALVAIQQDVSGTALQKALAIAKGIGATRAGVIPTTFKEETETDLFGEQVILVGGIMELMKAAFETLVEEGYQPEVAYFETINELKMLVDLVYEKGITGMVKAVSDTAKYGGMTVGKFVINEDVRKRMKEALQRIKSGKFAEEWVEEYGRGMPTVVNGLSQVQNSLEEKIGNQLKDLIQKGKPKKS.

One can recognise a KARI N-terminal Rossmann domain in the interval 5-185; that stretch reads SKIYTDKDSN…GATRAGVIPT (181 aa). NADP(+) is bound by residues 28 to 31, Ser56, and 86 to 89; these read YGSQ and DMVQ. The active site involves His111. Gly137 provides a ligand contact to NADP(+). Positions 186–331 constitute a KARI C-terminal knotted domain; the sequence is TFKEETETDL…NQLKDLIQKG (146 aa). The Mg(2+) site is built by Asp194, Glu198, Glu230, and Glu234. Ser255 serves as a coordination point for substrate.

Belongs to the ketol-acid reductoisomerase family. It depends on Mg(2+) as a cofactor.

It carries out the reaction (2R)-2,3-dihydroxy-3-methylbutanoate + NADP(+) = (2S)-2-acetolactate + NADPH + H(+). It catalyses the reaction (2R,3R)-2,3-dihydroxy-3-methylpentanoate + NADP(+) = (S)-2-ethyl-2-hydroxy-3-oxobutanoate + NADPH + H(+). It functions in the pathway amino-acid biosynthesis; L-isoleucine biosynthesis; L-isoleucine from 2-oxobutanoate: step 2/4. Its pathway is amino-acid biosynthesis; L-valine biosynthesis; L-valine from pyruvate: step 2/4. Its function is as follows. Involved in the biosynthesis of branched-chain amino acids (BCAA). Catalyzes an alkyl-migration followed by a ketol-acid reduction of (S)-2-acetolactate (S2AL) to yield (R)-2,3-dihydroxy-isovalerate. In the isomerase reaction, S2AL is rearranged via a Mg-dependent methyl migration to produce 3-hydroxy-3-methyl-2-ketobutyrate (HMKB). In the reductase reaction, this 2-ketoacid undergoes a metal-dependent reduction by NADPH to yield (R)-2,3-dihydroxy-isovalerate. This Saccharolobus islandicus (strain Y.N.15.51 / Yellowstone #2) (Sulfolobus islandicus) protein is Ketol-acid reductoisomerase (NADP(+)).